We begin with the raw amino-acid sequence, 361 residues long: Polyribonucleotide 5'-hydroxyl-kinase MJ1315 (361 aa).

ATP is bound at residue 39–46 (GGVDSGKT).

Requires a divalent metal cation as cofactor.

It catalyses the reaction a 5'-end dephospho-2'-deoxyribonucleoside-DNA + ATP = a 5'-end 5'-phospho-2'-deoxyribonucleoside-DNA + ADP + H(+). The catalysed reaction is a 5'-end dephospho-ribonucleoside-RNA + ATP = a 5'-end 5'-phospho-ribonucleoside-RNA + ADP + H(+). Functionally, polynucleotide kinase that can phosphorylate the 5'-hydroxyl groups of both single-stranded RNA (ssRNA) and single-stranded DNA (ssDNA). Exhibits a strong preference for ssRNA. This is Polyribonucleotide 5'-hydroxyl-kinase MJ1315 from Methanocaldococcus jannaschii (strain ATCC 43067 / DSM 2661 / JAL-1 / JCM 10045 / NBRC 100440) (Methanococcus jannaschii).